The following is a 448-amino-acid chain: tRNA modification GTPase MnmE (448 aa).

Residues arginine 24, glutamate 81, and lysine 120 each coordinate (6S)-5-formyl-5,6,7,8-tetrahydrofolate. The TrmE-type G domain occupies 216–373 (GLNVVLVGAP…LKRTLLREAG (158 aa)). Asparagine 226 contributes to the K(+) binding site. GTP contacts are provided by residues 226–231 (NVGKSS), 245–251 (TDIAGTT), and 270–273 (DTAG). Mg(2+) is bound at residue serine 230. K(+)-binding residues include threonine 245, isoleucine 247, and threonine 250. Threonine 251 is a binding site for Mg(2+). Lysine 448 provides a ligand contact to (6S)-5-formyl-5,6,7,8-tetrahydrofolate.

This sequence belongs to the TRAFAC class TrmE-Era-EngA-EngB-Septin-like GTPase superfamily. TrmE GTPase family. In terms of assembly, homodimer. Heterotetramer of two MnmE and two MnmG subunits. K(+) serves as cofactor.

The protein resides in the cytoplasm. Its function is as follows. Exhibits a very high intrinsic GTPase hydrolysis rate. Involved in the addition of a carboxymethylaminomethyl (cmnm) group at the wobble position (U34) of certain tRNAs, forming tRNA-cmnm(5)s(2)U34. In Neisseria meningitidis serogroup C (strain 053442), this protein is tRNA modification GTPase MnmE.